Here is a 100-residue protein sequence, read N- to C-terminus: Large ribosomal subunit protein bL27 (100 aa).

The propeptide occupies 1–9 (MLVMNLQLF).

This sequence belongs to the bacterial ribosomal protein bL27 family. In terms of processing, the N-terminus is cleaved by ribosomal processing cysteine protease Prp.

This is Large ribosomal subunit protein bL27 from Clostridium botulinum (strain Hall / ATCC 3502 / NCTC 13319 / Type A).